A 33-amino-acid polypeptide reads, in one-letter code: Photosystem II reaction center protein Psb30 (33 aa).

The chain crosses the membrane as a helical span at residues 5-25 (VIAQPIVLGLIVASGPLVIVS).

This sequence belongs to the Psb30/Ycf12 family. PSII is composed of 1 copy each of membrane proteins PsbA, PsbB, PsbC, PsbD, PsbE, PsbF, PsbH, PsbI, PsbJ, PsbK, PsbL, PsbM, PsbT, PsbX, PsbY, PsbZ, Psb30/Ycf12, peripheral proteins of the oxygen-evolving complex and a large number of cofactors. It forms dimeric complexes.

It localises to the plastid membrane. Its function is as follows. A core subunit of photosystem II (PSII), probably helps stabilize the reaction center. The chain is Photosystem II reaction center protein Psb30 from Aneura mirabilis (Parasitic liverwort).